Consider the following 1190-residue polypeptide: PAN2-PAN3 deadenylation complex catalytic subunit PAN2 (1190 aa).

WD repeat units lie at residues Thr24–Tyr63, Asn129–Leu166, Ser167–Thr207, Gly222–Pro264, Pro266–Leu306, and Asn322–Val361. Positions Pro364–Asn511 are linker. The 413-residue stretch at Lys512–Thr924 folds into the USP domain. An Exonuclease domain is found at Val988–Tyr1158. Asp991, Glu993, Asp1097, and Asp1150 together coordinate a divalent metal cation.

This sequence belongs to the peptidase C19 family. PAN2 subfamily. Forms a heterotrimer with an asymmetric homodimer of the regulatory subunit PAN3 to form the poly(A)-nuclease (PAN) deadenylation complex. A divalent metal cation serves as cofactor.

The protein localises to the cytoplasm. It catalyses the reaction Exonucleolytic cleavage of poly(A) to 5'-AMP.. With respect to regulation, positively regulated by the regulatory subunit PAN3. In terms of biological role, catalytic subunit of the poly(A)-nuclease (PAN) deadenylation complex, one of two cytoplasmic mRNA deadenylases involved in mRNA turnover. PAN specifically shortens poly(A) tails of RNA and the activity is stimulated by poly(A)-binding protein PAB1. PAN deadenylation is followed by rapid degradation of the shortened mRNA tails by the CCR4-NOT complex. Deadenylated mRNAs are then degraded by two alternative mechanisms, namely exosome-mediated 3'-5' exonucleolytic degradation, or deadenylation-dependent mRNA decaping and subsequent 5'-3' exonucleolytic degradation by XRN1. May also be involved in post-transcriptional maturation of mRNA poly(A) tails. The polypeptide is PAN2-PAN3 deadenylation complex catalytic subunit PAN2 (Candida albicans (strain SC5314 / ATCC MYA-2876) (Yeast)).